The following is a 476-amino-acid chain: Aspartyl/glutamyl-tRNA(Asn/Gln) amidotransferase subunit B (476 aa).

The protein belongs to the GatB/GatE family. GatB subfamily. In terms of assembly, heterotrimer of A, B and C subunits.

The catalysed reaction is L-glutamyl-tRNA(Gln) + L-glutamine + ATP + H2O = L-glutaminyl-tRNA(Gln) + L-glutamate + ADP + phosphate + H(+). The enzyme catalyses L-aspartyl-tRNA(Asn) + L-glutamine + ATP + H2O = L-asparaginyl-tRNA(Asn) + L-glutamate + ADP + phosphate + 2 H(+). Its function is as follows. Allows the formation of correctly charged Asn-tRNA(Asn) or Gln-tRNA(Gln) through the transamidation of misacylated Asp-tRNA(Asn) or Glu-tRNA(Gln) in organisms which lack either or both of asparaginyl-tRNA or glutaminyl-tRNA synthetases. The reaction takes place in the presence of glutamine and ATP through an activated phospho-Asp-tRNA(Asn) or phospho-Glu-tRNA(Gln). This chain is Aspartyl/glutamyl-tRNA(Asn/Gln) amidotransferase subunit B, found in Clostridium botulinum (strain Okra / Type B1).